The primary structure comprises 242 residues: Uridylate kinase (242 aa).

Lysine 11–glycine 14 is an ATP binding site. Residues glycine 19 to glycine 24 are involved in allosteric activation by GTP. Position 53 (glycine 53) interacts with UMP. Residues glycine 54 and arginine 58 each coordinate ATP. UMP is bound by residues aspartate 73 and isoleucine 134 to threonine 141. Asparagine 162, tyrosine 168, and aspartate 171 together coordinate ATP.

It belongs to the UMP kinase family. Homohexamer.

It localises to the cytoplasm. It catalyses the reaction UMP + ATP = UDP + ADP. It participates in pyrimidine metabolism; CTP biosynthesis via de novo pathway; UDP from UMP (UMPK route): step 1/1. Its activity is regulated as follows. Allosterically activated by GTP. Inhibited by UTP. Its function is as follows. Catalyzes the reversible phosphorylation of UMP to UDP. In Streptococcus pyogenes serotype M1, this protein is Uridylate kinase.